The primary structure comprises 858 residues: Transcription factor pytR (858 aa).

The tract at residues 1-35 is disordered; the sequence is MAHFSRVASDPSLAPQPSAPSGLDSSTTSSSSTGL. The segment at residues 39–65 is a DNA-binding region (zn(2)-C6 fungal-type); sequence CTFCRARKIRCSSGPICSACRERNINC. The segment at 72-99 is disordered; it reads RKGRPRRRGTNTSNAQAKKGDQENPTLG.

It is found in the nucleus. Transcription factor that regulates the expression of the gene cluster that mediates the biosynthesis of Pyranterreones, a family of antioxidative compounds. The polypeptide is Transcription factor pytR (Aspergillus terreus (strain NIH 2624 / FGSC A1156)).